Reading from the N-terminus, the 226-residue chain is Neuron-specific vesicular protein calcyon (226 aa).

The tract at residues 1–23 is disordered; that stretch reads MVKLGCSFSGKPGKETGDQDGAA. Residues 1-88 are Extracellular-facing; the sequence is MVKLGCSFSG…EEGRRLPTAR (88 aa). The chain crosses the membrane as a helical span at residues 89–109; sequence MIAFAMALLGCVLIMYKAIWY. Residues 110–226 are Cytoplasmic-facing; the sequence is DQFTCPDGFL…AEDVPSQSPK (117 aa). Positions 189 to 226 are disordered; sequence TAAAAAAAEGNEPSGKPLDMREKEDPQKAEDVPSQSPK. A compositionally biased stretch (basic and acidic residues) spans 206–219; the sequence is LDMREKEDPQKAED.

This sequence belongs to the NSG family. In terms of assembly, interacts with CLTA. In terms of tissue distribution, expressed exclusively in neurons (at protein level). In all age groups, expressed at significantly higher levels in the medial prefrontal and orbital frontal cortices of spontaneously hypertensive rats (SHR), a model of attention deficit-hyperactivity disorder, than Wistar Kyoto (WKY) animals. In the motor cortex, dorsal striatum and nucleus accumbens, expression is significantly elevated in SHR only in younger animals.

The protein resides in the cytoplasmic vesicle membrane. It is found in the cell membrane. In terms of biological role, interacts with clathrin light chain A and stimulates clathrin self-assembly and clathrin-mediated endocytosis. The chain is Neuron-specific vesicular protein calcyon (Caly) from Rattus norvegicus (Rat).